A 353-amino-acid chain; its full sequence is MENKFARTVLGDIPVEKLGITDCHDHFIKNGGPEVEEHIDFLMLNVDASIKEFKEFIDRGGSTIVTMDPPNVGRDVLKTLEIANAVKNLGGNVIMSTGFHKAKFYDKYSSWLAVVPTEEIVKMCVAEIEEGMDEYNYNGPVVKRSKAKAGIIKAGTGYGAIDRLELKALEVAARTSILTGCPILVHTQLGTMALEVAKHLIGFGANPDKIQISHLNKNPDKYYYEKVIKETGVTLCFDGPDRVKYYPDSLLAENIKYLVDKGLQKHITLSLDAGRILYQRNYGLTKGKQTFGLAYLFDRFLPLLKQVGVSKEAIFDILVNNPKRVLAFDEKRNFDPLKVSKEVLELKKELNLN.

Zn(2+) is bound by residues histidine 24, histidine 26, lysine 153, histidine 186, and histidine 214. N6-carboxylysine is present on lysine 153. 244–245 (KY) is a substrate binding site. Residue aspartate 272 coordinates Zn(2+). 275-278 (RILY) is a substrate binding site.

It belongs to the metallo-dependent hydrolases superfamily. Phosphotriesterase family. Zn(2+) is required as a cofactor.

It carries out the reaction a 1,4-lactone + H2O = a 4-hydroxyacid + H(+). The enzyme catalyses D-xylono-1,4-lactone 5-phosphate + H2O = 5-phospho-D-xylonate + H(+). It catalyses the reaction L-arabino-1,4-lactone 5-phosphate + H2O = 5-phospho-L-arabinonate + H(+). Its function is as follows. Catalyzes the hydrolysis of D-xylono-1,4-lactone-5-phosphate and L-arabino-1,4-lactone-5-phosphate. Also able to hydrolyze carboxy 1,4-lactones. In Mycoplasmopsis synoviae (strain 53) (Mycoplasma synoviae), this protein is Phospho-furanose lactonase.